The following is an 81-amino-acid chain: Large ribosomal subunit protein bL27 (81 aa).

Over residues 1-11 (MATSKSGGSSK) the composition is skewed to polar residues. Positions 1–21 (MATSKSGGSSKNGRDSISKRL) are disordered.

The protein belongs to the bacterial ribosomal protein bL27 family.

This is Large ribosomal subunit protein bL27 from Borrelia hermsii (strain HS1 / DAH).